The primary structure comprises 108 residues: MVMATTLFLLAGLAEIGGGYLIWLWLRDGKPVYLGLFGAVALALYGVIATFQAFPSFGRVYAAYGGVFIFLAVLWGWWIDGKAPDTYDWIGAVICLVGVGIMLWAPRP.

4 helical membrane passes run 6–26 (TLFL…WLWL), 31–51 (PVYL…IATF), 60–80 (VYAA…WWID), and 86–106 (TYDW…LWAP).

Belongs to the UPF0060 family.

It localises to the cell membrane. In Halalkalibacterium halodurans (strain ATCC BAA-125 / DSM 18197 / FERM 7344 / JCM 9153 / C-125) (Bacillus halodurans), this protein is UPF0060 membrane protein BH2744.